We begin with the raw amino-acid sequence, 208 residues long: Uracil phosphoribosyltransferase (208 aa).

Residues Arg-78, Arg-103, and 130–138 (DPMLATGGS) each bind 5-phospho-alpha-D-ribose 1-diphosphate. Uracil contacts are provided by residues Ile-193 and 198-200 (GDA). Position 199 (Asp-199) interacts with 5-phospho-alpha-D-ribose 1-diphosphate.

The protein belongs to the UPRTase family. Requires Mg(2+) as cofactor.

The catalysed reaction is UMP + diphosphate = 5-phospho-alpha-D-ribose 1-diphosphate + uracil. Its pathway is pyrimidine metabolism; UMP biosynthesis via salvage pathway; UMP from uracil: step 1/1. Allosterically activated by GTP. Its function is as follows. Catalyzes the conversion of uracil and 5-phospho-alpha-D-ribose 1-diphosphate (PRPP) to UMP and diphosphate. The protein is Uracil phosphoribosyltransferase of Pasteurella multocida (strain Pm70).